A 339-amino-acid polypeptide reads, in one-letter code: UPF0324 membrane protein spyM18_1033 (339 aa).

A run of 9 helical transmembrane segments spans residues 7–24 (KLPGLLLCLLLALPAWYL), 28–50 (FPIIGAPVFAILLGMLLALFYGH), 57–79 (GISFTSKCILQTAVVLLGFGLNL), 84–106 (AVGMQSLPIIISTIATALLVAYG), 118–140 (ATLVGVGSSICGGSAIAATAPVI), 150–172 (AISVIFLFNMLAALLFPSLGQLL), 256–275 (FILFFLLASLITTLMTSFGV), 290–307 (FIVMAMAAIGLNTNLVKL), and 314–336 (AILLGAICWVAITLVSLAMQLSL).

The protein belongs to the UPF0324 family.

Its subcellular location is the cell membrane. The protein is UPF0324 membrane protein spyM18_1033 of Streptococcus pyogenes serotype M18 (strain MGAS8232).